Here is a 492-residue protein sequence, read N- to C-terminus: MSLLMISENVKLAREYALLGNYDSAMVYYQGVLDQMNKYLYSVKDTFLQQKWQQVWQEINMEAKHVKDIMSTLEGFKLDNSPVKTTQHEFPAHDGEVWSLPVPVERRPSPGPRKRQSVQCNDNKSHNNRFGAGKGPNLPSSKNTNNVKMKPVRAREKKDTFLKVKDEKNKSSVDVSETEVKKFDGTGYDKDLIEALERDIISQNPNIRWDDIADLEEAKKLLKEAVVLPMWMPEFFKGIRRPWKGVLMVGPPGTGKTLLAKAVATECKTTFFNISSSTLTSKYRGESEKLVRLLFEMARFYAPTTIFIDEIDSICSRRGTSEEHEASRRVKAELLVQMDGVGGASENEDPSKMVMVLAATNFPWDIDEALRRRLEKRIYIPLPSAKGREELLRINLKELELADDVNIECIAENMDGYSGADITNVCRDASLMAMRRRIEGLTPEEIRNLSRDDMHMPTTMEDFEMALKKVSKSVSASDIEKYEKWIEEFGSC.

The disordered stretch occupies residues P91–K158. The span at L138–V147 shows a compositional bias: polar residues. Residue G250 to T257 participates in ATP binding.

It belongs to the AAA ATPase family. Katanin p60 subunit A1 subfamily. As to quaternary structure, can homooligomerize into hexameric rings, which may be promoted by interaction with microtubules. Interacts with katnb1, which may serve as a targeting subunit.

It is found in the cytoplasm. Its subcellular location is the cytoskeleton. The protein localises to the microtubule organizing center. The protein resides in the centrosome. It localises to the spindle pole. It is found in the spindle. It catalyses the reaction n ATP + n H2O + a microtubule = n ADP + n phosphate + (n+1) alpha/beta tubulin heterodimers.. With respect to regulation, ATPase activity is stimulated by microtubules, which promote homooligomerization. ATP-dependent microtubule severing is stimulated by interaction with katnb1. In terms of biological role, catalytic subunit of a complex which severs microtubules in an ATP-dependent manner. Microtubule severing may promote rapid reorganization of cellular microtubule arrays and the release of microtubules from the centrosome following nucleation. The protein is Katanin p60 ATPase-containing subunit A1 (katna1) of Xenopus tropicalis (Western clawed frog).